The following is an 819-amino-acid chain: Ion-translocating oxidoreductase complex subunit C (819 aa).

2 consecutive 4Fe-4S ferredoxin-type domains span residues Glu-368–Tyr-398 and Lys-408–Phe-437. The [4Fe-4S] cluster site is built by Cys-378, Cys-381, Cys-384, Cys-388, Cys-417, Cys-420, Cys-423, and Cys-427. 2 stretches are compositionally biased toward basic and acidic residues: residues Gln-465 to Ala-477 and Ala-485 to Glu-513. Disordered regions lie at residues Gln-465–Lys-568, Ala-580–Asp-677, and Ala-692–Ala-793. 2 stretches are compositionally biased toward polar residues: residues Val-554 to Asn-565 and Asn-587 to Asn-601. Over residues Gln-602–Gln-614 the composition is skewed to basic and acidic residues. Residues Gln-641–Glu-656 show a composition bias toward polar residues. Residues Glu-658–Glu-671 show a composition bias toward basic and acidic residues. Composition is skewed to polar residues over residues Asn-699–Glu-712 and Asn-755–Glu-768. Over residues Glu-770–Gln-782 the composition is skewed to basic and acidic residues.

This sequence belongs to the 4Fe4S bacterial-type ferredoxin family. RnfC subfamily. The complex is composed of six subunits: RnfA, RnfB, RnfC, RnfD, RnfE and RnfG. [4Fe-4S] cluster is required as a cofactor.

Its subcellular location is the cell inner membrane. Part of a membrane-bound complex that couples electron transfer with translocation of ions across the membrane. In Haemophilus influenzae (strain ATCC 51907 / DSM 11121 / KW20 / Rd), this protein is Ion-translocating oxidoreductase complex subunit C.